Reading from the N-terminus, the 205-residue chain is N-(5'-phosphoribosyl)anthranilate isomerase (205 aa).

Belongs to the TrpF family.

The catalysed reaction is N-(5-phospho-beta-D-ribosyl)anthranilate = 1-(2-carboxyphenylamino)-1-deoxy-D-ribulose 5-phosphate. The protein operates within amino-acid biosynthesis; L-tryptophan biosynthesis; L-tryptophan from chorismate: step 3/5. This is N-(5'-phosphoribosyl)anthranilate isomerase from Maridesulfovibrio salexigens (strain ATCC 14822 / DSM 2638 / NCIMB 8403 / VKM B-1763) (Desulfovibrio salexigens).